The sequence spans 36 residues: Pancreatic polypeptide (36 aa).

Y36 carries the tyrosine amide modification.

Belongs to the NPY family.

The protein localises to the secreted. Its function is as follows. Hormone secreted by pancreatic cells that acts as a regulator of pancreatic and gastrointestinal functions probably by signaling through the G protein-coupled receptor NPY4R2. The protein is Pancreatic polypeptide (PPY) of Chinchilla chinchilla (Short-tailed chinchilla).